A 312-amino-acid polypeptide reads, in one-letter code: Molybdenum cofactor biosynthesis bifunctional protein (312 aa).

The interval 1–155 is molybdenum cofactor biosynthesis protein C; the sequence is MEFTHLDENG…GGKSSAAEYH (155 aa). Substrate is bound by residues 74-76 and 110-111; these read LCH and ME. Aspartate 125 is a catalytic residue. The interval 156–312 is molybdenum cofactor biosynthesis protein B; sequence PRTAILVMSD…FPMLKGDGHA (157 aa).

The protein in the N-terminal section; belongs to the MoaC family. In the C-terminal section; belongs to the MoaB/Mog family.

The enzyme catalyses (8S)-3',8-cyclo-7,8-dihydroguanosine 5'-triphosphate = cyclic pyranopterin phosphate + diphosphate. It functions in the pathway cofactor biosynthesis; molybdopterin biosynthesis. In terms of biological role, catalyzes the conversion of (8S)-3',8-cyclo-7,8-dihydroguanosine 5'-triphosphate to cyclic pyranopterin monophosphate (cPMP). The polypeptide is Molybdenum cofactor biosynthesis bifunctional protein (moaCB) (Chlorobaculum tepidum (strain ATCC 49652 / DSM 12025 / NBRC 103806 / TLS) (Chlorobium tepidum)).